Reading from the N-terminus, the 269-residue chain is Nuclear egress protein 2 (269 aa).

Residues 1–247 (MSRRTYVRSE…VWKLALPVAN (247 aa)) lie on the Perinuclear space side of the membrane. A helical transmembrane segment spans residues 248-268 (VTYALFIVIVLVVVLGAVLFW). Residue lysine 269 is a topological domain, nuclear.

Belongs to the herpesviridae NEC2 protein family. As to quaternary structure, forms a heterohexameric complex with NEC1. Post-translationally, phosphorylated.

It is found in the host nucleus inner membrane. In terms of biological role, plays an essential role in virion nuclear egress, the first step of virion release from infected cell. Within the host nucleus, NEC1 interacts with the newly formed capsid through the vertexes and directs it to the inner nuclear membrane by associating with NEC2. Induces the budding of the capsid at the inner nuclear membrane as well as its envelopment into the perinuclear space. There, the NEC1/NEC2 complex promotes the fusion of the enveloped capsid with the outer nuclear membrane and the subsequent release of the viral capsid into the cytoplasm where it will reach the secondary budding sites in the host Golgi or trans-Golgi network. This is Nuclear egress protein 2 from Homo sapiens (Human).